The following is a 65-amino-acid chain: Small ribosomal subunit protein eS27 (65 aa).

Zn(2+) contacts are provided by cysteine 21, cysteine 24, cysteine 40, and cysteine 43. Residues 21-43 form a C4-type zinc finger; that stretch reads CRDCGNVQVVFARPSSTVTCNIC.

The protein belongs to the eukaryotic ribosomal protein eS27 family. As to quaternary structure, part of the 30S ribosomal subunit. It depends on Zn(2+) as a cofactor.

In Thermoplasma acidophilum (strain ATCC 25905 / DSM 1728 / JCM 9062 / NBRC 15155 / AMRC-C165), this protein is Small ribosomal subunit protein eS27.